Reading from the N-terminus, the 345-residue chain is Dihydroorotase (345 aa).

Positions 14 and 16 each coordinate Zn(2+). Substrate contacts are provided by residues 16-18 (HLR) and asparagine 42. Zn(2+) contacts are provided by lysine 100, histidine 137, and histidine 175. Position 100 is an N6-carboxylysine (lysine 100). Histidine 137 serves as a coordination point for substrate. Leucine 220 lines the substrate pocket. Aspartate 248 contributes to the Zn(2+) binding site. Aspartate 248 is a catalytic residue. Positions 252 and 264 each coordinate substrate.

Belongs to the metallo-dependent hydrolases superfamily. DHOase family. Class II DHOase subfamily. In terms of assembly, homodimer. The cofactor is Zn(2+).

The enzyme catalyses (S)-dihydroorotate + H2O = N-carbamoyl-L-aspartate + H(+). The protein operates within pyrimidine metabolism; UMP biosynthesis via de novo pathway; (S)-dihydroorotate from bicarbonate: step 3/3. Functionally, catalyzes the reversible cyclization of carbamoyl aspartate to dihydroorotate. The polypeptide is Dihydroorotase (Nitrosococcus oceani (strain ATCC 19707 / BCRC 17464 / JCM 30415 / NCIMB 11848 / C-107)).